A 208-amino-acid polypeptide reads, in one-letter code: Coiled-coil domain-containing protein 25 (208 aa).

Residues 1–105 lie on the Extracellular side of the membrane; that stretch reads MVFYFTSSSV…SNLKKTADMD (105 aa). A DNA-binding region spans residues 21–25; that stretch reads KDKYE. K23 is modified (N6-acetyllysine). The helical transmembrane segment at 106–122 threads the bilayer; the sequence is VGQIGFHRQKDVKIVTV. Residues 117–187 adopt a coiled-coil conformation; the sequence is VKIVTVEKKV…REMDELRSYS (71 aa). The Cytoplasmic segment spans residues 123 to 208; that stretch reads EKKVNEILNR…QDGNDSDEFM (86 aa). Basic and acidic residues predominate over residues 145–184; that stretch reads EAEKECRDHEERNEKKAQIQEMKRREKEEMKKKREMDELR. Residues 145-208 are disordered; that stretch reads EAEKECRDHE…QDGNDSDEFM (64 aa). A Phosphoserine modification is found at S204.

The protein belongs to the CCDC25 family. Interacts (via cytoplasmic region) with ILK.

It localises to the cell membrane. Its subcellular location is the endomembrane system. Transmembrane receptor that senses neutrophil extracellular traps (NETs) and triggers the ILK-PARVB pathway to enhance cell motility. NETs are mainly composed of DNA fibers and are released by neutrophils to bind pathogens during inflammation. Formation of NETs is also associated with cancer metastasis, NET-DNA acting as a chemotactic factor to attract cancer cells. Specifically binds NETs on its extracellular region, in particular the 8-OHdG-enriched DNA present in NETs, and recruits ILK, initiating the ILK-PARVB cascade to induce cytoskeleton rearrangement and directional migration of cells. This chain is Coiled-coil domain-containing protein 25, found in Bos taurus (Bovine).